The sequence spans 237 residues: Uridylate kinase (237 aa).

12–15 lines the ATP pocket; sequence KLSG. The involved in allosteric activation by GTP stretch occupies residues 20-25; that stretch reads GENGFG. Gly54 serves as a coordination point for UMP. Gly55 and Arg59 together coordinate ATP. UMP contacts are provided by residues Asp72 and 133–140; that span reads TGNPYFST. Residues Tyr166 and Asp169 each coordinate ATP.

This sequence belongs to the UMP kinase family. As to quaternary structure, homohexamer.

It is found in the cytoplasm. The enzyme catalyses UMP + ATP = UDP + ADP. It functions in the pathway pyrimidine metabolism; CTP biosynthesis via de novo pathway; UDP from UMP (UMPK route): step 1/1. Allosterically activated by GTP. Inhibited by UTP. Its function is as follows. Catalyzes the reversible phosphorylation of UMP to UDP. This chain is Uridylate kinase, found in Clostridium perfringens (strain SM101 / Type A).